Here is a 744-residue protein sequence, read N- to C-terminus: Tripartite motif-containing protein 3 (744 aa).

Alanine 2 carries the N-acetylalanine modification. The tract at residues 2 to 290 is interaction with KIF21B; it reads AKREDSPGPE…LAAQAFPERP (289 aa). A Phosphoserine modification is found at serine 7. Residues 22–63 form an RING-type zinc finger; the sequence is CSICLDRYRCPKVLPCLHTFCERCLQNYIPPQSLTLSCPVCR. The B box-type zinc finger occupies 110–151; that stretch reads GRPLSCPNHEGKTMEFYCEACETAMCGECRAGEHREHGTVLL. 4 residues coordinate Zn(2+): cysteine 115, histidine 118, cysteine 138, and histidine 143. Residues 153-224 are a coiled coil; it reads DVVEQHKAAL…RKQALVSDLE (72 aa). The Filamin repeat unit spans residues 317-418; that stretch reads TTSATAHETV…VRGSPFRVRA (102 aa). Positions 419–464 are disordered; that stretch reads LRPGDLPPSPDDVKRRVKSPGGPGSHVRQKAVRRPSSMYSTGGKRK. Serine 427 is modified (phosphoserine). NHL repeat units follow at residues 473–516, 520–563, 564–605, 609–652, 656–699, and 700–743; these read VFRV…FSNE, KFRF…FSPE, GKFK…FQPN, VGRF…YSAD, LFKF…FDSS, and GSFL…YRYL.

This sequence belongs to the TRIM/RBCC family. In terms of assembly, forms homooligomers. Interacts with TRIM2; this interaction reduces TRIM2 activity. Associates with myosin-Vb (MYO5B) and alpha-actinin-4 (ACTN4). Component of the CART complex, at least composed of ACTN4, HGS/HRS, MYO5B and TRIM3. Interacts with ZFYVE28/LST2. Interacts with KIF21B.

The protein localises to the cytoplasm. It localises to the early endosome. Its subcellular location is the golgi apparatus. The protein resides in the trans-Golgi network. It is found in the cell projection. The protein localises to the dendrite. The catalysed reaction is S-ubiquitinyl-[E2 ubiquitin-conjugating enzyme]-L-cysteine + [acceptor protein]-L-lysine = [E2 ubiquitin-conjugating enzyme]-L-cysteine + N(6)-ubiquitinyl-[acceptor protein]-L-lysine.. Functionally, E3 ubiquitin ligase that plays essential roles in neuronal functions such as regulation of neuronal plasticity, learning, and memory. In addition to its neuronal functions, participates in other biological processes such as innate immunity or cell cycle regulation. Component of the cytoskeleton-associated recycling or transport complex in neurons, polyubiquitinates gamma-actin, thus regulating neuronal plasticity, learning, and memory. Ubiquitinates postsynaptic scaffold GKAP, a neuronal substrate involved in synaptic remodeling and thereby modulates dendritic spine morphology. Positively regulates motility of microtubule-dependent motor protein KIF21B. Induces growth arrest via its RING-dependent E3 ligase activity and ubiquinates CDKN1A. Positively regulates TLR3-mediated signaling by mediating 'Lys-63'-linked polyubiquitination of TLR3. In turn, promotes the recognition and sorting of polyubiquitinated TLR3 by the ESCRT complexes. This chain is Tripartite motif-containing protein 3 (Trim3), found in Mus musculus (Mouse).